The following is a 358-amino-acid chain: Pituitary-specific positive transcription factor 1 (358 aa).

The 9aaTAD signature appears at 5 to 12; the sequence is AFSADSFT. The tract at residues 164–195 is disordered; the sequence is PAVLSEEPPLGGTKDLRLRSRPPDDPPDMDSP. The span at 177–187 shows a compositional bias: basic and acidic residues; sequence KDLRLRSRPPD. In terms of domain architecture, POU-specific spans 192-266; the sequence is MDSPQIRELE…ILAKWLDEAE (75 aa). Residues 282 to 341 constitute a DNA-binding region (homeobox); sequence KRKRRTTISLGAKEALERSFGEKIKPSSQEIVRMAEGLHLEKEVVRVWFCNRRQREKRVK.

It belongs to the POU transcription factor family. Class-1 subfamily.

Its subcellular location is the nucleus. Functionally, transcription factor that activates growth hormone and prolactin genes. Specifically binds to the consensus sequence 5'-TAAAT-3'. The protein is Pituitary-specific positive transcription factor 1 (pou1f1) of Oncorhynchus mykiss (Rainbow trout).